Here is a 358-residue protein sequence, read N- to C-terminus: Alanine racemase (358 aa).

K34 serves as the catalytic Proton acceptor; specific for D-alanine. K34 is subject to N6-(pyridoxal phosphate)lysine. R129 contacts substrate. The active-site Proton acceptor; specific for L-alanine is Y254. M302 provides a ligand contact to substrate.

The protein belongs to the alanine racemase family. Requires pyridoxal 5'-phosphate as cofactor.

The enzyme catalyses L-alanine = D-alanine. It functions in the pathway amino-acid biosynthesis; D-alanine biosynthesis; D-alanine from L-alanine: step 1/1. Its function is as follows. Catalyzes the interconversion of L-alanine and D-alanine. May also act on other amino acids. The polypeptide is Alanine racemase (alr) (Hamiltonella defensa subsp. Acyrthosiphon pisum (strain 5AT)).